The following is a 390-amino-acid chain: Chalcone synthase (390 aa).

Cysteine 164 is a catalytic residue.

It belongs to the thiolase-like superfamily. Chalcone/stilbene synthases family.

The catalysed reaction is (E)-4-coumaroyl-CoA + 3 malonyl-CoA + 3 H(+) = 2',4,4',6'-tetrahydroxychalcone + 3 CO2 + 4 CoA. The protein operates within secondary metabolite biosynthesis; flavonoid biosynthesis. Functionally, the primary product of this enzyme is 4,2',4',6'-tetrahydroxychalcone (also termed naringenin-chalcone or chalcone) which undergoes enzyme-catalyzed or spontaneous isomerization into naringenin. This is Chalcone synthase from Hypericum androsaemum (Tutsan).